A 543-amino-acid chain; its full sequence is Chaperonin GroEL 1 (543 aa).

Residues 30-33 (TLGP), lysine 51, 87-91 (DGTTT), glycine 415, and aspartate 496 contribute to the ATP site.

The protein belongs to the chaperonin (HSP60) family. In terms of assembly, forms a cylinder of 14 subunits composed of two heptameric rings stacked back-to-back. Interacts with the co-chaperonin GroES.

It localises to the cytoplasm. It carries out the reaction ATP + H2O + a folded polypeptide = ADP + phosphate + an unfolded polypeptide.. Its function is as follows. Together with its co-chaperonin GroES, plays an essential role in assisting protein folding. The GroEL-GroES system forms a nano-cage that allows encapsulation of the non-native substrate proteins and provides a physical environment optimized to promote and accelerate protein folding. This Roseobacter denitrificans (strain ATCC 33942 / OCh 114) (Erythrobacter sp. (strain OCh 114)) protein is Chaperonin GroEL 1.